Here is a 504-residue protein sequence, read N- to C-terminus: Protein Dok-7 (504 aa).

The PH domain maps to 4–109 (AALVEGQVKL…WDTRIRYALG (106 aa)). The region spanning 105-210 (RYALGEVHRF…RGISPTKGPF (106 aa)) is the IRS-type PTB domain. Disordered regions lie at residues 210–232 (FGLRPVLPDPSSGGPSASEERVA), 248–348 (LSHS…HSSY), and 371–483 (SLLS…PHAG). Low complexity predominate over residues 263 to 280 (LSSSSSEASHSDISASSR). Composition is skewed to polar residues over residues 285–297 (PEQSSSSAGTSQE), 331–341 (GRQSSSDSGIA), and 421–430 (PASQGSSDHG).

In terms of assembly, homodimer. Forms a heterotetramer composed of 2 DOK7 and 2 MUSK molecules which facilitates MUSK trans-autophosphorylation on tyrosine residue and activation. Interacts (via IRS-type PTB domain) with MUSK (via cytoplasmic part); requires MUSK phosphorylation.

It localises to the cell membrane. It is found in the synapse. In terms of biological role, probable muscle-intrinsic activator of MUSK that plays an essential role in neuromuscular synaptogenesis. Acts in aneural activation of MUSK and subsequent acetylcholine receptor (AchR) clustering in myotubes. Induces autophosphorylation of MUSK. This chain is Protein Dok-7 (Dok7), found in Mus musculus (Mouse).